The sequence spans 672 residues: Threonine--tRNA ligase (672 aa).

In terms of domain architecture, TGS spans 1–64 (MTELLKISLP…EGDAELALIT (64 aa)). A catalytic region spans residues 257–566 (DHRKLGREMD…LIEHFAGRLP (310 aa)). Zn(2+) contacts are provided by Cys-362, His-413, and His-543.

The protein belongs to the class-II aminoacyl-tRNA synthetase family. Homodimer. It depends on Zn(2+) as a cofactor.

It is found in the cytoplasm. It carries out the reaction tRNA(Thr) + L-threonine + ATP = L-threonyl-tRNA(Thr) + AMP + diphosphate + H(+). Its function is as follows. Catalyzes the attachment of threonine to tRNA(Thr) in a two-step reaction: L-threonine is first activated by ATP to form Thr-AMP and then transferred to the acceptor end of tRNA(Thr). Also edits incorrectly charged L-seryl-tRNA(Thr). The protein is Threonine--tRNA ligase of Erythrobacter litoralis (strain HTCC2594).